The chain runs to 341 residues: L-amino acid-D/L-Glu epimerase (341 aa).

Substrate is bound by residues Thr-132 and 157–159 (KIK). Positions 186, 212, and 237 each coordinate Mg(2+). Residues Lys-261 and 315–317 (DLD) contribute to the substrate site.

This sequence belongs to the mandelate racemase/muconate lactonizing enzyme family. Requires Mg(2+) as cofactor.

Its function is as follows. Catalyzes the epimerization of dipeptides with L-Glu in the second position. Has epimerase activity with L-Gly-L-Glu, L-Ala-L-Glu, L-Ser-L-Glu, L-Pro-L-Glu, L-Val-L-Glu, L-Met-L-Glu, L-Thr-L-Glu and L-Phe-L-Glu (in vitro). The sequence is that of L-amino acid-D/L-Glu epimerase from Sulfurimonas denitrificans (strain ATCC 33889 / DSM 1251) (Thiomicrospira denitrificans (strain ATCC 33889 / DSM 1251)).